The following is a 149-amino-acid chain: Probable flagellum biosynthesis repressor protein FlbT (149 aa).

It belongs to the FlbT family.

Its function is as follows. Has a post-transcriptional repressor function in flagellum biogenesis. Associates with the 5'-UTR of fljK mRNA and promotes its degradation. The protein is Probable flagellum biosynthesis repressor protein FlbT of Rhizobium etli (strain CIAT 652).